The chain runs to 366 residues: MRVEGKPYTTIWTGEDGASIKIIDQTRLPHRFEIIAISDVEAAARAIAEMWVRGAPLIGVTAAYGLALAMRADPSDANLERASAHLKATRPTAVNLQWAVDRVRRLIESAPPPQRFAAAFAEAGVIARDDIALCEAIGMHGLSLIKTIAAGKPPGAPVNVLTHCNAGWLATVDWGTATAPVYKAHDAGLAVHVYVDETRPRNQGAALTAFELGQHGVPHTVIVDNAGGHLMQHGGIDMVIVGTDRTTASGDVCNKIGTYLKALAARDNNIPFYVAAPSPSIDFSIADGVREVPIEIRSEAEVTHISGLSADGEITRVRLTPEGSRALNPAFDVTPARLVTGLITERGVIKANASALAAAFRERVAG.

Residues R53–A55, R90, and Q203 contribute to the substrate site. Residue D244 is the Proton donor of the active site. N254–K255 lines the substrate pocket.

This sequence belongs to the eIF-2B alpha/beta/delta subunits family. MtnA subfamily.

The enzyme catalyses 5-(methylsulfanyl)-alpha-D-ribose 1-phosphate = 5-(methylsulfanyl)-D-ribulose 1-phosphate. The protein operates within amino-acid biosynthesis; L-methionine biosynthesis via salvage pathway; L-methionine from S-methyl-5-thio-alpha-D-ribose 1-phosphate: step 1/6. Its function is as follows. Catalyzes the interconversion of methylthioribose-1-phosphate (MTR-1-P) into methylthioribulose-1-phosphate (MTRu-1-P). This chain is Methylthioribose-1-phosphate isomerase, found in Methylocella silvestris (strain DSM 15510 / CIP 108128 / LMG 27833 / NCIMB 13906 / BL2).